Here is a 978-residue protein sequence, read N- to C-terminus: Sensor histidine kinase TodS (978 aa).

One can recognise a PAS 1 domain in the interval 32–103 (CEEHARIIFD…TQKRLVETAS (72 aa)). One can recognise a PAC 1 domain in the interval 108–162 (VRCDVEILGKSGGREVIAVDFSLLPICNEEGSIVYLLAEGRNITDKKKAEAMLAL). The Histidine kinase 1 domain maps to 187–405 (KVSHELRTPL…LFQVKLPLNA (219 aa)). Histidine 190 is modified (phosphohistidine; by autocatalysis). A Response regulatory domain is found at 452 to 567 (RVLIVEDNPD…ELRARVSNLV (116 aa)). Aspartate 500 carries the 4-aspartylphosphate modification. A PAS 2 domain is found at 611–681 (SEARWKAVYE…QRLANLLQGG (71 aa)). The PAC 2 domain occupies 685–737 (YSVERSYLCKNGSTIWANASVSLMPQRVGESPVILQIIDDITEKKQAQENLNQ). Residues 757–974 (YIAHEINQPL…CFLVSIPARQ (218 aa)) enclose the Histidine kinase 2 domain. At histidine 760 the chain carries Phosphohistidine.

In terms of processing, autophosphorylated. Activation requires a sequential transfer of a phosphate group from a His in the primary transmitter domain, to an Asp in the receiver domain and to a His in the secondary transmitter domain.

The protein localises to the cytoplasm. It catalyses the reaction ATP + protein L-histidine = ADP + protein N-phospho-L-histidine.. Activity is regulated by agonists and antagonists. Binding of agonists such as toluene or benzene to TodS stimulates autophosphorylation at His-190. Activity is inhibited by antagonists such as o-xylene, o-chlorotoluene and trimethylbenzene isomers, which bind to TodS but do not stimulate autophosphorylation. Agonists and antagonists bind to the same PAS domain. In terms of biological role, member of the two-component regulatory system TodS/TodT involved in the regulation of toluene degradation. Phosphorylates TodT via a four-step phosphorelay in response to toluene. Can also be induced by benzene and ethylbenzene. In Pseudomonas putida (strain DOT-T1E), this protein is Sensor histidine kinase TodS (todS).